Here is a 434-residue protein sequence, read N- to C-terminus: APETALA2-like protein 2 (434 aa).

The segment at 1-116 is disordered; the sequence is MLLDLNVESP…KTRRGPRSRS (116 aa). The span at 12–23 shows a compositional bias: low complexity; it reads RSGTSSSSVLNS. Positions 25-38 are enriched in gly residues; the sequence is DAGGGGGGGGGGGL. Residues 72 to 87 show a composition bias toward pro residues; the sequence is LPPPPPAAPSPAPAWQ. Positions 104–113 are enriched in basic residues; it reads VAKKTRRGPR. The Nuclear localization signal signature appears at 106 to 115; that stretch reads KKTRRGPRSR. DNA-binding regions (AP2/ERF) lie at residues 118-174 and 210-267; these read QYRG…INFN and KFRG…TNFE. Residues 291–295 carry the EAR motif; the sequence is LDLRI.

This sequence belongs to the AP2/ERF transcription factor family. AP2 subfamily. May form homodimer. Interacts with TPR2/ASP1. Highly expressed in developing panicles and in young seedlings. Present at low levels at all developmental stages.

It is found in the nucleus. Functionally, probable transcription factor. Involved in spikelet transition. Together with SNB, controls synergistically inflorescence architecture and floral meristem establishment via the regulation of spatio-temporal expression of B- and E-function floral organ identity genes in the lodicules and of spikelet meristem genes. Prevents lemma and palea elongation as well as grain growth. This is APETALA2-like protein 2 from Oryza sativa subsp. japonica (Rice).